We begin with the raw amino-acid sequence, 219 residues long: Cytidylate kinase (219 aa).

10–18 (GPAAAGKST) lines the ATP pocket.

The protein belongs to the cytidylate kinase family. Type 1 subfamily.

It is found in the cytoplasm. The enzyme catalyses CMP + ATP = CDP + ADP. It carries out the reaction dCMP + ATP = dCDP + ADP. The polypeptide is Cytidylate kinase (Staphylococcus saprophyticus subsp. saprophyticus (strain ATCC 15305 / DSM 20229 / NCIMB 8711 / NCTC 7292 / S-41)).